The following is a 1485-amino-acid chain: Chromosome partition protein MukB (1485 aa).

An ATP-binding site is contributed by 34-41; sequence GGNGAGKS. Coiled coils occupy residues 337 to 480 and 509 to 605; these read LNLV…QAYQ and QHLA…PVWL. The interval 666–783 is flexible hinge; the sequence is PSGAEDARLI…EVPLFGRAAR (118 aa). 2 coiled-coil regions span residues 835 to 915 and 977 to 1116; these read EAEI…IQQH and GMLT…AKAG.

This sequence belongs to the SMC family. MukB subfamily. As to quaternary structure, homodimerization via its hinge domain. Binds to DNA via its C-terminal region. Interacts, and probably forms a ternary complex, with MukE and MukF via its C-terminal region. The complex formation is stimulated by calcium or magnesium. Interacts with tubulin-related protein FtsZ.

It is found in the cytoplasm. It localises to the nucleoid. Its function is as follows. Plays a central role in chromosome condensation, segregation and cell cycle progression. Functions as a homodimer, which is essential for chromosome partition. Involved in negative DNA supercoiling in vivo, and by this means organize and compact chromosomes. May achieve or facilitate chromosome segregation by condensation DNA from both sides of a centrally located replisome during cell division. The sequence is that of Chromosome partition protein MukB from Yersinia pseudotuberculosis serotype IB (strain PB1/+).